The primary structure comprises 271 residues: Phosphonates import ATP-binding protein PhnC 2 (271 aa).

The ABC transporter domain maps to 2-245 (LVVEGLTCRF…IARELYDLEA (244 aa)). 34 to 41 (GRSGAGKS) contributes to the ATP binding site.

This sequence belongs to the ABC transporter superfamily. Phosphonates importer (TC 3.A.1.9.1) family. In terms of assembly, the complex is composed of two ATP-binding proteins (PhnC), two transmembrane proteins (PhnE) and a solute-binding protein (PhnD).

The protein localises to the cell inner membrane. The catalysed reaction is phosphonate(out) + ATP + H2O = phosphonate(in) + ADP + phosphate + H(+). Part of the ABC transporter complex PhnCDE involved in phosphonates import. Responsible for energy coupling to the transport system. The protein is Phosphonates import ATP-binding protein PhnC 2 of Rhodopseudomonas palustris (strain BisB18).